We begin with the raw amino-acid sequence, 309 residues long: Aspartate carbamoyltransferase catalytic subunit (309 aa).

2 residues coordinate carbamoyl phosphate: Arg-59 and Thr-60. Lys-87 contributes to the L-aspartate binding site. Residues Arg-109, His-139, and Gln-142 each contribute to the carbamoyl phosphate site. L-aspartate is bound by residues Arg-172 and Arg-224. The carbamoyl phosphate site is built by Ala-265 and Pro-266.

It belongs to the aspartate/ornithine carbamoyltransferase superfamily. ATCase family. As to quaternary structure, heterododecamer (2C3:3R2) of six catalytic PyrB chains organized as two trimers (C3), and six regulatory PyrI chains organized as three dimers (R2).

The catalysed reaction is carbamoyl phosphate + L-aspartate = N-carbamoyl-L-aspartate + phosphate + H(+). The protein operates within pyrimidine metabolism; UMP biosynthesis via de novo pathway; (S)-dihydroorotate from bicarbonate: step 2/3. In terms of biological role, catalyzes the condensation of carbamoyl phosphate and aspartate to form carbamoyl aspartate and inorganic phosphate, the committed step in the de novo pyrimidine nucleotide biosynthesis pathway. The sequence is that of Aspartate carbamoyltransferase catalytic subunit from Streptococcus uberis (strain ATCC BAA-854 / 0140J).